A 240-amino-acid polypeptide reads, in one-letter code: MQDPNADTEWNDILRKKGILPPKESLKELEEEEAEKEEQLLQQSVVKTYEDMTLEELEENEDEFSEEDERAIEMYRQQRLAEWKATQLKNKFGEVLEISGKDYVQEVTKAGEGLWVILHLYKQGIPLCSLINHHLSGLARKFPDVKFIKAISTTCIPNYPDRNLPTVFVYREGDIKAQFIGPLVFGGMNLTIDELEWKLSESGAIKTALEENPKKPIQDLLLSSVRGPVPMRRDSDSEDD.

Residue M1 is modified to N-acetylmethionine. The Phosducin domain occupies 27 to 181 (KELEEEEAEK…EGDIKAQFIG (155 aa)). A phosphoserine mark is found at S44, S65, S235, and S237. Residues 92–240 (FGEVLEISGK…MRRDSDSEDD (149 aa)) form a thioredoxin fold region.

This sequence belongs to the phosducin family. In terms of assembly, interacts (via thioredoxin fold region) with KDR/VEGFR2 (via juxtamembrane domain). Forms ternary complexes with the chaperonin CCT complex and actin substrate, leading to inhibition of actin folding. Interacts with XIAP (via BIR 3 and RING domain). Interacts with HSP90AA1 and HSP90AB1. In terms of processing, N-terminal methionine acetylation destabilizes the protein. Expressed in blood vessels (at protein level).

It localises to the cytoplasm. Its subcellular location is the perinuclear region. It is found in the endoplasmic reticulum. In terms of biological role, acts as a chaperone for the angiogenic VEGF receptor KDR/VEGFR2, increasing its abundance by inhibiting its ubiquitination and degradation. Inhibits the folding activity of the chaperonin-containing T-complex (CCT) which leads to inhibition of cytoskeletal actin folding. Acts as a chaperone during heat shock alongside HSP90 and HSP40/70 chaperone complexes. Modulates the activation of caspases during apoptosis. The sequence is that of Phosducin-like protein 3 (Pdcl3) from Mus musculus (Mouse).